The sequence spans 59 residues: Zinc finger protein HVO_2753 (59 aa).

4 short sequence motifs (c(P)XCG motif) span residues 12–16, 29–33, 39–43, and 51–55; these read CVSCG, CPDCG, and CSKCR. Positions 29 and 32 each coordinate Zn(2+). Zn(2+) contacts are provided by cysteine 51 and cysteine 54.

As to quaternary structure, monomer in solution.

Its function is as follows. Zinc-binding protein that binds only one zinc ion. Is required for swarming and biofilm formation. The polypeptide is Zinc finger protein HVO_2753 (Haloferax volcanii (strain ATCC 29605 / DSM 3757 / JCM 8879 / NBRC 14742 / NCIMB 2012 / VKM B-1768 / DS2) (Halobacterium volcanii)).